The following is a 186-amino-acid chain: Protein GrpE (186 aa).

Positions 1–13 are enriched in polar residues; the sequence is MSENTQPEQNQPL. The disordered stretch occupies residues 1 to 22; the sequence is MSENTQPEQNQPLTGAPSPEEL.

This sequence belongs to the GrpE family. As to quaternary structure, homodimer.

The protein localises to the cytoplasm. In terms of biological role, participates actively in the response to hyperosmotic and heat shock by preventing the aggregation of stress-denatured proteins, in association with DnaK and GrpE. It is the nucleotide exchange factor for DnaK and may function as a thermosensor. Unfolded proteins bind initially to DnaJ; upon interaction with the DnaJ-bound protein, DnaK hydrolyzes its bound ATP, resulting in the formation of a stable complex. GrpE releases ADP from DnaK; ATP binding to DnaK triggers the release of the substrate protein, thus completing the reaction cycle. Several rounds of ATP-dependent interactions between DnaJ, DnaK and GrpE are required for fully efficient folding. This Polaromonas sp. (strain JS666 / ATCC BAA-500) protein is Protein GrpE.